The primary structure comprises 274 residues: Thiamine kinase (274 aa).

The protein belongs to the thiamine kinase family.

It catalyses the reaction thiamine + ATP = thiamine phosphate + ADP + H(+). Its pathway is cofactor biosynthesis; thiamine diphosphate biosynthesis; thiamine phosphate from thiamine: step 1/1. Catalyzes the ATP-dependent phosphorylation of thiamine to thiamine phosphate. Is involved in thiamine salvage. This is Thiamine kinase from Escherichia coli O9:H4 (strain HS).